The primary structure comprises 144 residues: Endoribonuclease YbeY (144 aa).

Positions 105, 109, and 115 each coordinate Zn(2+).

The protein belongs to the endoribonuclease YbeY family. The cofactor is Zn(2+).

Its subcellular location is the cytoplasm. In terms of biological role, single strand-specific metallo-endoribonuclease involved in late-stage 70S ribosome quality control and in maturation of the 3' terminus of the 16S rRNA. This is Endoribonuclease YbeY from Chlorobium limicola (strain DSM 245 / NBRC 103803 / 6330).